A 334-amino-acid polypeptide reads, in one-letter code: Phosphate acyltransferase (334 aa).

It belongs to the PlsX family. In terms of assembly, homodimer. Probably interacts with PlsY.

It localises to the cytoplasm. It carries out the reaction a fatty acyl-[ACP] + phosphate = an acyl phosphate + holo-[ACP]. Its pathway is lipid metabolism; phospholipid metabolism. In terms of biological role, catalyzes the reversible formation of acyl-phosphate (acyl-PO(4)) from acyl-[acyl-carrier-protein] (acyl-ACP). This enzyme utilizes acyl-ACP as fatty acyl donor, but not acyl-CoA. This Clostridium kluyveri (strain NBRC 12016) protein is Phosphate acyltransferase.